We begin with the raw amino-acid sequence, 612 residues long: Heparan-sulfate 6-O-sulfotransferase 2 (612 aa).

Topologically, residues 1–4 (MALP) are cytoplasmic. Residues 5-27 (AFAARALGPPLQPEQGAPARTTC) traverse the membrane as a helical; Signal-anchor for type II membrane protein segment. Positions 9-52 (RALGPPLQPEQGAPARTTCPRRHSRVEAELAASRPGSVAASVRA) are disordered. Residues 28-612 (PRRHSRVEAE…DYIGSVETWR (585 aa)) are Lumenal-facing. N-linked (GlcNAc...) asparagine glycosylation occurs at asparagine 209. 233 to 241 (HIQKTGGTT) provides a ligand contact to 3'-phosphoadenylyl sulfate. Substrate contacts are provided by residues 263–264 (KK), arginine 280, tryptophan 285, and histidine 290. The active-site Proton acceptor is the histidine 290. 3'-phosphoadenylyl sulfate contacts are provided by arginine 325 and serine 333. The substrate site is built by histidine 337 and tryptophan 344. The N-linked (GlcNAc...) asparagine glycan is linked to asparagine 404. 457–459 (TQY) contributes to the 3'-phosphoadenylyl sulfate binding site. N-linked (GlcNAc...) asparagine glycosylation occurs at asparagine 460. Residue 463-464 (RA) coordinates 3'-phosphoadenylyl sulfate. A disordered region spans residues 529-612 (HFQSQSQGQS…DYIGSVETWR (84 aa)). The segment covering 531–564 (QSQSQGQSQSQSPGQNLSQNPNPNPNQNLTQNLS) has biased composition (low complexity). 5 N-linked (GlcNAc...) asparagine glycosylation sites follow: asparagine 546, asparagine 558, asparagine 562, asparagine 574, and asparagine 599. The segment covering 565 to 577 (HNLTPSSNPNSTQ) has biased composition (polar residues).

It belongs to the sulfotransferase 6 family.

It localises to the membrane. It catalyses the reaction alpha-D-glucosaminyl-[heparan sulfate](n) + 3'-phosphoadenylyl sulfate = 6-sulfo-alpha-D-glucosaminyl-[heparan sulfate](n) + adenosine 3',5'-bisphosphate + H(+). 6-O-sulfation enzyme which catalyzes the transfer of sulfate from 3'-phosphoadenosine 5'-phosphosulfate (PAPS) to position 6 of the N-sulfoglucosamine residue (GlcNS) of heparan sulfate. This Mus musculus (Mouse) protein is Heparan-sulfate 6-O-sulfotransferase 2 (Hs6st2).